Here is a 359-residue protein sequence, read N- to C-terminus: Tropomodulin-1 (359 aa).

The interval 36 to 61 (ELDPDNALLPAGLRQKDQTTKAPTGP) is disordered. Positions 39-138 (PDNALLPAGL…CDIAAILGMH (100 aa)) are tropomyosin-binding.

The protein belongs to the tropomodulin family. As to quaternary structure, binds to the N-terminus of tropomyosin and to actin. Interacts with FLII. Highly expressed in the erythrocyte, heart and skeletal muscle.

Its subcellular location is the cytoplasm. The protein resides in the cytoskeleton. Its function is as follows. Blocks the elongation and depolymerization of the actin filaments at the pointed end. The Tmod/TM complex contributes to the formation of the short actin protofilament, which in turn defines the geometry of the membrane skeleton. This chain is Tropomodulin-1 (Tmod1), found in Mus musculus (Mouse).